The chain runs to 349 residues: Signal peptidase I (349 aa).

A run of 2 helical transmembrane segments spans residues 3 to 23 and 25 to 45; these read NLFF…LDYF and LPNT…VLWC. Topologically, residues 46 to 80 are cytoplasmic; that stretch reads YHRFVVLPKRHRQVARAEQRSGKTLSEEEKAKIEP. A helical transmembrane segment spans residues 81 to 101; the sequence is ISEASEFLSSLFPVLAVVFLV. The Periplasmic portion of the chain corresponds to 102–349; it reads RSFLFEPFQI…RFERFFTAIK (248 aa). Active-site residues include Ser-115 and Lys-196.

It belongs to the peptidase S26 family.

It localises to the cell inner membrane. The enzyme catalyses Cleavage of hydrophobic, N-terminal signal or leader sequences from secreted and periplasmic proteins.. This Haemophilus influenzae (strain ATCC 51907 / DSM 11121 / KW20 / Rd) protein is Signal peptidase I (lepB).